Reading from the N-terminus, the 251-residue chain is 4-hydroxy-tetrahydrodipicolinate reductase (251 aa).

Residues 8 to 13 (GAKGRM), 76 to 78 (GTT), and 106 to 109 (APNF) each bind NAD(+). The Proton donor/acceptor role is filled by H136. H137 is a binding site for (S)-2,3,4,5-tetrahydrodipicolinate. The active-site Proton donor is K140. 146-147 (GT) lines the (S)-2,3,4,5-tetrahydrodipicolinate pocket.

This sequence belongs to the DapB family.

The protein localises to the cytoplasm. The enzyme catalyses (S)-2,3,4,5-tetrahydrodipicolinate + NAD(+) + H2O = (2S,4S)-4-hydroxy-2,3,4,5-tetrahydrodipicolinate + NADH + H(+). It catalyses the reaction (S)-2,3,4,5-tetrahydrodipicolinate + NADP(+) + H2O = (2S,4S)-4-hydroxy-2,3,4,5-tetrahydrodipicolinate + NADPH + H(+). The protein operates within amino-acid biosynthesis; L-lysine biosynthesis via DAP pathway; (S)-tetrahydrodipicolinate from L-aspartate: step 4/4. In terms of biological role, catalyzes the conversion of 4-hydroxy-tetrahydrodipicolinate (HTPA) to tetrahydrodipicolinate. The polypeptide is 4-hydroxy-tetrahydrodipicolinate reductase (Bifidobacterium longum subsp. infantis (strain ATCC 15697 / DSM 20088 / JCM 1222 / NCTC 11817 / S12)).